Reading from the N-terminus, the 209-residue chain is Regulator of G-protein signaling 1 (209 aa).

One can recognise an RGS domain in the interval 85 to 200 (SLEKLLANQT…LKSDIYLNLL (116 aa)).

In terms of assembly, interacts with GNAI1 and GNAQ. In terms of tissue distribution, detected in peripheral blood monocytes. Expression is relatively low in B-cells and chronic lymphocytic leukemia B-cells; however, in other types of malignant B-cell such as non-Hodgkin lymphoma and hairy cell leukemia, expression is constitutively high.

The protein localises to the cell membrane. It localises to the cytoplasm. It is found in the cytosol. Regulates G protein-coupled receptor signaling cascades, including signaling downstream of the N-formylpeptide chemoattractant receptors and leukotriene receptors. Inhibits B cell chemotaxis toward CXCL12. Inhibits signal transduction by increasing the GTPase activity of G protein alpha subunits thereby driving them into their inactive GDP-bound form. The sequence is that of Regulator of G-protein signaling 1 (RGS1) from Homo sapiens (Human).